Reading from the N-terminus, the 340-residue chain is MGYRVAIVGATGEVGRTFLKVLEERNFPVDELVLYASERSEGKVLTFKGKEYTVKALNKENSFKGIDIALFSAGGSTSKEWAPKFAKDGVVVIDNSSAWRMDPDVPLVVPEVNPEDVKDFKKKGIIANPNCSTIQMVVALKPIYDKAGIKRVVVSTYQAVSGAGAKAIEDLKNQTKAWCEGKEMPKAQKFPHQIAFNALPHIDVFFEDGYTKEENKMLYETRKIMHDENIKVSATCVRIPVFYGHSESISMETEKEISPEEAREVLKNAPGVIVIDNPQNNEYPMPIMAEGRDEVFVGRIRKDRVFEPGLSMWVVADNIRKGAATNAVQIAELLVKEGLI.

Residues 11–14 and 39–40 contribute to the NADP(+) site; these read TGEV and RS. Arg-100 contributes to the phosphate binding site. The active-site Acyl-thioester intermediate is Cys-131. Substrate is bound at residue Gln-158. An NADP(+)-binding site is contributed by 161–162; sequence SG. Lys-216 is a phosphate binding site. Arg-238 contacts substrate. The active-site Proton acceptor is His-245. Asn-318 lines the NADP(+) pocket.

It belongs to the aspartate-semialdehyde dehydrogenase family. As to quaternary structure, homodimer.

The catalysed reaction is L-aspartate 4-semialdehyde + phosphate + NADP(+) = 4-phospho-L-aspartate + NADPH + H(+). It functions in the pathway amino-acid biosynthesis; L-lysine biosynthesis via DAP pathway; (S)-tetrahydrodipicolinate from L-aspartate: step 2/4. The protein operates within amino-acid biosynthesis; L-methionine biosynthesis via de novo pathway; L-homoserine from L-aspartate: step 2/3. It participates in amino-acid biosynthesis; L-threonine biosynthesis; L-threonine from L-aspartate: step 2/5. In terms of biological role, catalyzes the NADPH-dependent formation of L-aspartate-semialdehyde (L-ASA) by the reductive dephosphorylation of L-aspartyl-4-phosphate. The chain is Aspartate-semialdehyde dehydrogenase from Aquifex aeolicus (strain VF5).